Consider the following 104-residue polypeptide: Nucleoid-associated protein Amuc_1227 (104 aa).

The protein belongs to the YbaB/EbfC family. As to quaternary structure, homodimer.

The protein resides in the cytoplasm. It localises to the nucleoid. Binds to DNA and alters its conformation. May be involved in regulation of gene expression, nucleoid organization and DNA protection. The chain is Nucleoid-associated protein Amuc_1227 from Akkermansia muciniphila (strain ATCC BAA-835 / DSM 22959 / JCM 33894 / BCRC 81048 / CCUG 64013 / CIP 107961 / Muc).